The following is a 477-amino-acid chain: Cytochrome P450 708A2 (477 aa).

A helical membrane pass occupies residues Phe3 to Leu23. Residue Cys426 participates in heme binding.

The protein belongs to the cytochrome P450 family. Heme is required as a cofactor. Expressed primarily in the root epidermis.

Its subcellular location is the membrane. Hydroxylates thalianol into thalian-diol. This is Cytochrome P450 708A2 (CYP708A2) from Arabidopsis thaliana (Mouse-ear cress).